The sequence spans 203 residues: ATP-dependent Clp protease proteolytic subunit 2 (203 aa).

Catalysis depends on Ser-101, which acts as the Nucleophile. His-126 is a catalytic residue.

This sequence belongs to the peptidase S14 family. In terms of assembly, fourteen ClpP subunits assemble into 2 heptameric rings which stack back to back to give a disk-like structure with a central cavity, resembling the structure of eukaryotic proteasomes.

The protein localises to the cytoplasm. It carries out the reaction Hydrolysis of proteins to small peptides in the presence of ATP and magnesium. alpha-casein is the usual test substrate. In the absence of ATP, only oligopeptides shorter than five residues are hydrolyzed (such as succinyl-Leu-Tyr-|-NHMec, and Leu-Tyr-Leu-|-Tyr-Trp, in which cleavage of the -Tyr-|-Leu- and -Tyr-|-Trp bonds also occurs).. Cleaves peptides in various proteins in a process that requires ATP hydrolysis. Has a chymotrypsin-like activity. Plays a major role in the degradation of misfolded proteins. This chain is ATP-dependent Clp protease proteolytic subunit 2, found in Prochlorococcus marinus (strain MIT 9312).